The following is a 492-amino-acid chain: Putative methyl-accepting chemotaxis AlkN (492 aa).

Transmembrane regions (helical) follow at residues 9 to 29 (FFLI…GMRL) and 159 to 179 (YVYF…FLLM). In terms of domain architecture, HAMP spans 180–231 (KKTRSSIDEIVHVMNDMSRGDLTYRTIPSNDEVGKMQSSIIAMGAGVSALIE). Positions 236–472 (IQGDLFNSAG…DMLDNANIIR (237 aa)) constitute a Methyl-accepting transducer domain.

The protein belongs to the methyl-accepting chemotaxis (MCP) protein family.

It is found in the membrane. It functions in the pathway hydrocarbon metabolism; alkane degradation. Its function is as follows. Chemotactic-signal transducers respond to changes in the concentration of attractants and repellents in the environment, transduce a signal from the outside to the inside of the cell, and facilitate sensory adaptation through the variation of the level of methylation. This is Putative methyl-accepting chemotaxis AlkN (alkN) from Ectopseudomonas oleovorans (Pseudomonas oleovorans).